Here is a 31-residue protein sequence, read N- to C-terminus: Cycloviolacin-O23 (31 aa).

Residues 1–31 constitute a cross-link (cyclopeptide (Gly-Asn)); the sequence is GLPTCGETCFGGTCNTPGCTCDSSWPICTHN. Intrachain disulfides connect cysteine 5-cysteine 19, cysteine 9-cysteine 21, and cysteine 14-cysteine 28.

In terms of processing, this is a cyclic peptide. As to expression, expressed in leaves but not in petals, petioles, roots and runners (at protein level).

In terms of biological role, probably participates in a plant defense mechanism. The chain is Cycloviolacin-O23 from Viola odorata (Sweet violet).